Consider the following 238-residue polypeptide: MSDKKYNVDEGEIAKFSRIADKWWDKSGEFKTLHDINPLRLDYIDGHADLRGKRVLDVGCGGGILAESMARRGAAFVKGIDMAEQSLETARLHAALNNVADIEYECIRVEDLAEAEPHSFDVVTCMEMMEHVPDPAAIVRACANLVKPDGMVFFSTINKNPKSYLHLIVAAEYLLKFVPKGTHDWKKFIAPAELARMCRQAGLDVADTKGMTYHVLSQTYALCDSTDVNYMFACRPAF.

The S-adenosyl-L-methionine site is built by Arg-40, Gly-59, Asp-81, and Met-126.

It belongs to the methyltransferase superfamily. UbiG/COQ3 family.

It catalyses the reaction a 3-demethylubiquinol + S-adenosyl-L-methionine = a ubiquinol + S-adenosyl-L-homocysteine + H(+). The enzyme catalyses a 3-(all-trans-polyprenyl)benzene-1,2-diol + S-adenosyl-L-methionine = a 2-methoxy-6-(all-trans-polyprenyl)phenol + S-adenosyl-L-homocysteine + H(+). It participates in cofactor biosynthesis; ubiquinone biosynthesis. O-methyltransferase that catalyzes the 2 O-methylation steps in the ubiquinone biosynthetic pathway. This is Ubiquinone biosynthesis O-methyltransferase from Neisseria meningitidis serogroup C (strain 053442).